A 427-amino-acid polypeptide reads, in one-letter code: Intermediate conductance calcium-activated potassium channel protein 4 (427 aa).

Residues 29-49 traverse the membrane as a helical segment; the sequence is ALVLAGTGIGLMVLHAEMLWF. A helical membrane pass occupies residues 59 to 79; that stretch reads FLVKCTISISTFLLLCLIVAF. Residues 108–128 form a helical membrane-spanning segment; it reads IVLELVVCGLHPAPVRGPPCV. The chain crosses the membrane as a helical span at residues 143-163; it reads GFLGQGEALLSLAMLLRLYLV. The helical transmembrane segment at 207 to 227 threads the bilayer; sequence LLLGLTLGLWLTTAWVLSVAE. Positions 241–261 form an intramembrane region, pore-forming; the sequence is LWLIPITFLTIGYGDVVPGTM. The chain crosses the membrane as a helical span at residues 265–285; sequence IVCLCTGVMGVCCTALLVAVV. Residues 286–347 form a calmodulin-binding region; sequence ARKLEFNKAE…RRHQRKLLAA (62 aa). Histidine 358 carries the post-translational modification Phosphohistidine.

This sequence belongs to the potassium channel KCNN family. KCa3.1/KCNN4 subfamily. As to quaternary structure, homodimer. Homotetramer. Heterotetramer of potassium channel proteins. Interacts with MTMR6; this interaction leads to selective dephosphorylation of PI(3)P in a lipid microdomain adjacent to KCNN4, resulting in a decrease of intermediate conductance calcium-activated potassium channel activity. Interacts (via the C-tail domain) with CALM1; the calmodulin binding is constitutive, does not require calcium and mediates calcium-dependent gating and four calmodulin molecules bind to one channel tetramer. Post-translationally, phosphorylation at His-358 by NDKB activates the intermediate conductance calcium-activated potassium channel activity, and conversely it's dephosphorylation by PHPT1 inhibits this activity. In terms of tissue distribution, widely expressed in non-excitable tissues.

Its subcellular location is the cell membrane. It localises to the cell projection. It is found in the ruffle membrane. The catalysed reaction is K(+)(in) = K(+)(out). The channel is inhibited by clotrimazole and charybdotoxin but is insensitive to apamin. Functionally, intermediate conductance calcium-activated potassium channel that mediates the voltage-independent transmembrane transfer of potassium across the cell membrane through a constitutive interaction with calmodulin which binds the intracellular calcium allowing its opening. The current is characterized by a voltage-independent activation, an intracellular calcium concentration increase-dependent activation and a single-channel conductance of about 25 picosiemens. Also presents an inwardly rectifying current, thus reducing its already small outward conductance of potassium ions, which is particularly the case when the membrane potential displays positive values, above + 20 mV. Controls calcium influx during vascular contractility by being responsible of membrane hyperpolarization induced by vasoactive factors in proliferative vascular smooth muscle cell types. Following calcium influx, the consecutive activation of KCNN4 channel leads to a hyperpolarization of the cell membrane potential and hence an increase of the electrical driving force for further calcium influx promoting sustained calcium entry in response to stimulation with chemotactic peptides. Required for maximal calcium influx and proliferation during the reactivation of naive T-cells. Plays a role in the late stages of EGF-induced macropinocytosis through activation by PI(3)P. This is Intermediate conductance calcium-activated potassium channel protein 4 from Homo sapiens (Human).